We begin with the raw amino-acid sequence, 293 residues long: Bifunctional protein FolD (293 aa).

Residues 166 to 168 (GRS), Ser191, and Ile232 each bind NADP(+).

It belongs to the tetrahydrofolate dehydrogenase/cyclohydrolase family. As to quaternary structure, homodimer.

It catalyses the reaction (6R)-5,10-methylene-5,6,7,8-tetrahydrofolate + NADP(+) = (6R)-5,10-methenyltetrahydrofolate + NADPH. It carries out the reaction (6R)-5,10-methenyltetrahydrofolate + H2O = (6R)-10-formyltetrahydrofolate + H(+). Its pathway is one-carbon metabolism; tetrahydrofolate interconversion. In terms of biological role, catalyzes the oxidation of 5,10-methylenetetrahydrofolate to 5,10-methenyltetrahydrofolate and then the hydrolysis of 5,10-methenyltetrahydrofolate to 10-formyltetrahydrofolate. This chain is Bifunctional protein FolD, found in Synechococcus sp. (strain JA-2-3B'a(2-13)) (Cyanobacteria bacterium Yellowstone B-Prime).